Consider the following 36-residue polypeptide: Photosystem I reaction center subunit VIII (36 aa).

A helical transmembrane segment spans residues 9–29 (ISVPLVGLVFPAITMVLSFIY).

The protein belongs to the PsaI family.

It is found in the plastid. Its subcellular location is the chloroplast thylakoid membrane. In terms of biological role, may help in the organization of the PsaL subunit. The protein is Photosystem I reaction center subunit VIII of Huperzia lucidula (Shining clubmoss).